Consider the following 276-residue polypeptide: Formamidopyrimidine-DNA glycosylase (276 aa).

Proline 2 (schiff-base intermediate with DNA) is an active-site residue. Glutamate 3 (proton donor) is an active-site residue. Lysine 60 (proton donor; for beta-elimination activity) is an active-site residue. The DNA site is built by arginine 113 and arginine 152. The FPG-type zinc-finger motif lies at 241-275 (NVFRKTGHPCPRCGHLIEKLIVAQRSTHICPICQK). The Proton donor; for delta-elimination activity role is filled by arginine 265.

The protein belongs to the FPG family. In terms of assembly, monomer. It depends on Zn(2+) as a cofactor.

It carries out the reaction Hydrolysis of DNA containing ring-opened 7-methylguanine residues, releasing 2,6-diamino-4-hydroxy-5-(N-methyl)formamidopyrimidine.. The catalysed reaction is 2'-deoxyribonucleotide-(2'-deoxyribose 5'-phosphate)-2'-deoxyribonucleotide-DNA = a 3'-end 2'-deoxyribonucleotide-(2,3-dehydro-2,3-deoxyribose 5'-phosphate)-DNA + a 5'-end 5'-phospho-2'-deoxyribonucleoside-DNA + H(+). Involved in base excision repair of DNA damaged by oxidation or by mutagenic agents. Acts as a DNA glycosylase that recognizes and removes damaged bases. Has a preference for oxidized purines, such as 7,8-dihydro-8-oxoguanine (8-oxoG). Has AP (apurinic/apyrimidinic) lyase activity and introduces nicks in the DNA strand. Cleaves the DNA backbone by beta-delta elimination to generate a single-strand break at the site of the removed base with both 3'- and 5'-phosphates. The sequence is that of Formamidopyrimidine-DNA glycosylase from Protochlamydia amoebophila (strain UWE25).